We begin with the raw amino-acid sequence, 208 residues long: T-cell surface glycoprotein CD8 beta chain (208 aa).

The N-terminal stretch at 1 to 21 (MQPWLWLVFSVKLSALWGSSA) is a signal peptide. In terms of domain architecture, Ig-like V-type spans 22–131 (LLQTPSSLLV…MVVFGTGTKL (110 aa)). At 22 to 168 (LLQTPSSLLV…KTQKGLTCGL (147 aa)) the chain is on the extracellular side. Residues Asn34, Asn88, and Asn94 are each glycosylated (N-linked (GlcNAc...) asparagine). A disulfide bridge links Cys41 with Cys115. Residues 169–189 (ITLSLLVACILVLLVSLSVAI) form a helical membrane-spanning segment. Over 190–208 (HFHCMRRRARIHFMKQFHK) the chain is Cytoplasmic.

As to quaternary structure, forms disulfide-linked heterodimers with CD8A at the cell surface. Interacts with CD3D; this interaction couples TCR-CD3 with CD8. Interacts with LCK. Phosphorylated as a consequence of T-cell activation. In terms of processing, palmitoylated at the cytoplasmic tail and thereby targets the heterodimer CD8A/CD8B to lipid rafts unlike CD8A homodimers.

The protein localises to the cell membrane. Functionally, integral membrane glycoprotein that plays an essential role in the immune response and serves multiple functions in responses against both external and internal offenses. In T-cells, functions primarily as a coreceptor for MHC class I molecule:peptide complex. The antigens presented by class I peptides are derived from cytosolic proteins while class II derived from extracellular proteins. Interacts simultaneously with the T-cell receptor (TCR) and the MHC class I proteins presented by antigen presenting cells (APCs). In turn, recruits the Src kinase LCK to the vicinity of the TCR-CD3 complex. A palmitoylation site in the cytoplasmic tail of CD8B chain contributes to partitioning of CD8 into the plasma membrane lipid rafts where signaling proteins are enriched. Once LCK recruited, it initiates different intracellular signaling pathways by phosphorylating various substrates ultimately leading to lymphokine production, motility, adhesion and activation of cytotoxic T-lymphocytes (CTLs). Additionally, plays a critical role in thymic selection of CD8+ T-cells. This Rattus norvegicus (Rat) protein is T-cell surface glycoprotein CD8 beta chain (Cd8b).